A 228-amino-acid chain; its full sequence is Protein GrpE (228 aa).

Basic and acidic residues predominate over residues 1-22 (MDDKQKTNEEVKASSFDSEKSS). A disordered region spans residues 1–71 (MDDKQKTNEE…DQTNTNNNEL (71 aa)). Over residues 38–53 (QNVQHDNGSNPAQKQN) the composition is skewed to polar residues.

It belongs to the GrpE family. As to quaternary structure, homodimer.

The protein localises to the cytoplasm. Its function is as follows. Participates actively in the response to hyperosmotic and heat shock by preventing the aggregation of stress-denatured proteins, in association with DnaK and GrpE. It is the nucleotide exchange factor for DnaK and may function as a thermosensor. Unfolded proteins bind initially to DnaJ; upon interaction with the DnaJ-bound protein, DnaK hydrolyzes its bound ATP, resulting in the formation of a stable complex. GrpE releases ADP from DnaK; ATP binding to DnaK triggers the release of the substrate protein, thus completing the reaction cycle. Several rounds of ATP-dependent interactions between DnaJ, DnaK and GrpE are required for fully efficient folding. The protein is Protein GrpE of Coprothermobacter proteolyticus (strain ATCC 35245 / DSM 5265 / OCM 4 / BT).